Reading from the N-terminus, the 96-residue chain is Prokineticin Bm8-e (96 aa).

The signal sequence occupies residues 1–19; sequence MKCFAQIVVLLLVIAFSHG. 5 disulfides stabilise this stretch: Cys-26–Cys-38, Cys-32–Cys-50, Cys-37–Cys-78, Cys-60–Cys-86, and Cys-80–Cys-95.

This sequence belongs to the AVIT (prokineticin) family. Expressed by the skin glands.

The protein resides in the secreted. Its function is as follows. Potent agonist for both PKR1/PROKR1 and PKR2/PROKR2, and inducer of a potent and long-lasting hyperalgesia. Also potentiates capsaicin-induced TRPV1 current, when tested on DRG neurons. At subnanomolar concentrations, this protein both induces potent chemotaxis of macrophages and stimulates LPS-induced production of the pro-inflammatory cytokines IL-1 and IL-12. In vivo, potently stimulates the contraction of the guinea-pig gastrointestinal (GI) smooth muscle (nanomolar concentration). The protein is Prokineticin Bm8-e of Bombina maxima (Giant fire-bellied toad).